Reading from the N-terminus, the 140-residue chain is MLYHGVDLVEVRRIRQAVMRYGQRFLARVYTAAERADCEIAPQVMRYEALAARWAAKEACAKALGIGLRGLGAFTVDYPRAGLHDIEVVRDAAGRPTLHLSGVAAQTANALQIRALAVSLSHTDELAIASVVAWVDLSGV.

Asp-7 and Glu-58 together coordinate Mg(2+).

It belongs to the P-Pant transferase superfamily. AcpS family. Mg(2+) serves as cofactor.

It localises to the cytoplasm. It carries out the reaction apo-[ACP] + CoA = holo-[ACP] + adenosine 3',5'-bisphosphate + H(+). In terms of biological role, transfers the 4'-phosphopantetheine moiety from coenzyme A to a Ser of acyl-carrier-protein. The polypeptide is Holo-[acyl-carrier-protein] synthase (Chloroflexus aggregans (strain MD-66 / DSM 9485)).